The chain runs to 83 residues: Cobrotoxin homolog (83 aa).

The signal sequence occupies residues 1-21 (METLLLTLLVVTIVCLDLGYT). 4 disulfide bridges follow: Cys24–Cys45, Cys38–Cys62, Cys64–Cys75, and Cys76–Cys81.

This sequence belongs to the three-finger toxin family. Short-chain subfamily. Type I alpha-neurotoxin sub-subfamily. In terms of tissue distribution, expressed by the venom gland.

The protein resides in the secreted. Binds to muscle nicotinic acetylcholine receptor (nAChR) and inhibit acetylcholine from binding to the receptor, thereby impairing neuromuscular transmission. The polypeptide is Cobrotoxin homolog (Naja naja (Indian cobra)).